Here is a 437-residue protein sequence, read N- to C-terminus: Adenylosuccinate synthetase (437 aa).

GTP contacts are provided by residues 12–18 (GDEGKGK) and 40–42 (GHT). Asp13 acts as the Proton acceptor in catalysis. 2 residues coordinate Mg(2+): Asp13 and Gly40. Residues 13 to 16 (DEGK), 38 to 41 (NAGH), Thr128, Arg142, Gln223, Thr238, and Arg302 contribute to the IMP site. The active-site Proton donor is His41. Residue 298–304 (TTTGRKR) participates in substrate binding. Residues Arg304, 330–332 (KLD), and 412–414 (SLG) each bind GTP.

The protein belongs to the adenylosuccinate synthetase family. Homodimer. Mg(2+) is required as a cofactor.

Its subcellular location is the cytoplasm. It carries out the reaction IMP + L-aspartate + GTP = N(6)-(1,2-dicarboxyethyl)-AMP + GDP + phosphate + 2 H(+). The protein operates within purine metabolism; AMP biosynthesis via de novo pathway; AMP from IMP: step 1/2. Functionally, plays an important role in the de novo pathway of purine nucleotide biosynthesis. Catalyzes the first committed step in the biosynthesis of AMP from IMP. The polypeptide is Adenylosuccinate synthetase (Trichodesmium erythraeum (strain IMS101)).